Reading from the N-terminus, the 186-residue chain is Outer-membrane lipoprotein LolB (186 aa).

The N-terminal stretch at 1 to 16 (MRRLAVIASLAWALGG) is a signal peptide. Cys17 is lipidated: N-palmitoyl cysteine. Cys17 carries the S-diacylglycerol cysteine lipid modification.

The protein belongs to the LolB family. In terms of assembly, monomer.

It localises to the cell outer membrane. In terms of biological role, plays a critical role in the incorporation of lipoproteins in the outer membrane after they are released by the LolA protein. The polypeptide is Outer-membrane lipoprotein LolB (Thiobacillus denitrificans (strain ATCC 25259 / T1)).